Reading from the N-terminus, the 451-residue chain is Probable M18 family aminopeptidase 1 (451 aa).

Zn(2+) contacts are provided by His93, His168, and His426.

The protein belongs to the peptidase M18 family. It depends on Zn(2+) as a cofactor.

The protein is Probable M18 family aminopeptidase 1 (apeA) of Thermotoga maritima (strain ATCC 43589 / DSM 3109 / JCM 10099 / NBRC 100826 / MSB8).